Consider the following 200-residue polypeptide: Elongation factor Ts (200 aa).

The tract at residues 80–83 (TDFV) is involved in Mg(2+) ion dislocation from EF-Tu.

It belongs to the EF-Ts family.

It is found in the cytoplasm. Associates with the EF-Tu.GDP complex and induces the exchange of GDP to GTP. It remains bound to the aminoacyl-tRNA.EF-Tu.GTP complex up to the GTP hydrolysis stage on the ribosome. In Caldanaerobacter subterraneus subsp. tengcongensis (strain DSM 15242 / JCM 11007 / NBRC 100824 / MB4) (Thermoanaerobacter tengcongensis), this protein is Elongation factor Ts.